The primary structure comprises 110 residues: Large ribosomal subunit protein uL22 (110 aa).

The protein belongs to the universal ribosomal protein uL22 family. As to quaternary structure, part of the 50S ribosomal subunit.

This protein binds specifically to 23S rRNA; its binding is stimulated by other ribosomal proteins, e.g. L4, L17, and L20. It is important during the early stages of 50S assembly. It makes multiple contacts with different domains of the 23S rRNA in the assembled 50S subunit and ribosome. In terms of biological role, the globular domain of the protein is located near the polypeptide exit tunnel on the outside of the subunit, while an extended beta-hairpin is found that lines the wall of the exit tunnel in the center of the 70S ribosome. This is Large ribosomal subunit protein uL22 from Methylococcus capsulatus (strain ATCC 33009 / NCIMB 11132 / Bath).